Consider the following 283-residue polypeptide: Elongation factor Ts (283 aa).

An involved in Mg(2+) ion dislocation from EF-Tu region spans residues 79-82 (TDFV).

Belongs to the EF-Ts family.

Its subcellular location is the cytoplasm. Its function is as follows. Associates with the EF-Tu.GDP complex and induces the exchange of GDP to GTP. It remains bound to the aminoacyl-tRNA.EF-Tu.GTP complex up to the GTP hydrolysis stage on the ribosome. The chain is Elongation factor Ts from Pseudoalteromonas translucida (strain TAC 125).